A 160-amino-acid chain; its full sequence is Small ribosomal subunit protein bS6 (160 aa).

Residues 100-160 are disordered; the sequence is PSSVLARKSD…DDARETAGAE (61 aa). 2 stretches are compositionally biased toward basic and acidic residues: residues 106-116 and 136-160; these read RKSDDRGDRGN and RSSE…AGAE.

Belongs to the bacterial ribosomal protein bS6 family.

Its function is as follows. Binds together with bS18 to 16S ribosomal RNA. The chain is Small ribosomal subunit protein bS6 from Gluconobacter oxydans (strain 621H) (Gluconobacter suboxydans).